Reading from the N-terminus, the 257-residue chain is Ribosomal RNA small subunit methyltransferase J (257 aa).

S-adenosyl-L-methionine-binding positions include 107–108, 123–124, and D177; these read RD and ER.

Belongs to the methyltransferase superfamily. RsmJ family.

It localises to the cytoplasm. The catalysed reaction is guanosine(1516) in 16S rRNA + S-adenosyl-L-methionine = N(2)-methylguanosine(1516) in 16S rRNA + S-adenosyl-L-homocysteine + H(+). Its function is as follows. Specifically methylates the guanosine in position 1516 of 16S rRNA. The polypeptide is Ribosomal RNA small subunit methyltransferase J (Haemophilus influenzae (strain PittEE)).